The chain runs to 348 residues: 2-methyl-6-phytyl-1,4-hydroquinone methyltransferase 2, chloroplastic (348 aa).

The disordered stretch occupies residues 1–48; the sequence is MAMASSAYAPAGGVGTHSAPGRIRPPRGLGFSTTTTKSRPLVLTRRGG. The transit peptide at 1 to 59 directs the protein to the chloroplast; that stretch reads MAMASSAYAPAGGVGTHSAPGRIRPPRGLGFSTTTTKSRPLVLTRRGGGGGNISVARLR. The Chloroplast intermembrane segment spans residues 60 to 317; sequence CAASSSSAAA…PVNPITFLFR (258 aa). The interval 125–134 is SAM motif I; sequence VVDVGGGTGF. An SAM motif II region spans residues 170 to 183; the sequence is VTIMEGDAEDLPFP. Positions 211–224 are SAM motif III; sequence RVLRLGGVACMIGP. A helical membrane pass occupies residues 318 to 338; it reads FLMGTICAAYYVLVPIYMWIK. The Stromal portion of the chain corresponds to 339 to 348; sequence DQIVPKGMPI.

The protein belongs to the class I-like SAM-binding methyltransferase superfamily. MPBQ/MBSQ MT family.

The protein localises to the plastid. The protein resides in the chloroplast inner membrane. It carries out the reaction 2-methyl-6-phytyl-1,4-benzene-1,4-diol + S-adenosyl-L-methionine = 2,3-dimethyl-6-phytylbenzene-1,4-diol + S-adenosyl-L-homocysteine + H(+). It catalyses the reaction 2-methyl-6-(all-trans-nonaprenyl)benzene-1,4-diol + S-adenosyl-L-methionine = plastoquinol-9 + S-adenosyl-L-homocysteine + H(+). The catalysed reaction is 6-geranylgeranyl-2-methylbenzene-1,4-diol + S-adenosyl-L-methionine = 6-geranylgeranyl-2,3-dimethylbenzene-1,4-diol + S-adenosyl-L-homocysteine + H(+). Its pathway is cofactor biosynthesis; tocopherol biosynthesis. In terms of biological role, involved in a key methylation step in both tocopherols (vitamin E) and plastoquinone synthesis. Catalyzes the conversion of 2-methyl-6-phytyl-1,4-hydroquinone (MPBQ) to 2,3-dimethyl-6-phytyl-1,4-hydroquinone (DMPQ, a substrate for tocopherol cyclase), and 2-methyl-6-solanyl-1,4-benzoquinone (MSBQ) to plastoquinone. The sequence is that of 2-methyl-6-phytyl-1,4-hydroquinone methyltransferase 2, chloroplastic from Oryza sativa subsp. japonica (Rice).